Reading from the N-terminus, the 308-residue chain is GTPase Era (308 aa).

In terms of domain architecture, Era-type G spans 14 to 181 (RCGFVALIGA…RSTLAEMVPP (168 aa)). The G1 stretch occupies residues 22 to 29 (GAPNVGKS). 22–29 (GAPNVGKS) lines the GTP pocket. The G2 stretch occupies residues 48–52 (QTTRA). The G3 stretch occupies residues 69 to 72 (DTPG). Residues 69–73 (DTPGI) and 131–134 (NKVD) each bind GTP. The interval 131-134 (NKVD) is G4. Positions 160–162 (IAA) are G5. In terms of domain architecture, KH type-2 spans 212–289 (LHQELPYQST…HLFLFVKVRE (78 aa)).

The protein belongs to the TRAFAC class TrmE-Era-EngA-EngB-Septin-like GTPase superfamily. Era GTPase family. Monomer.

The protein localises to the cytoplasm. Its subcellular location is the cell inner membrane. Functionally, an essential GTPase that binds both GDP and GTP, with rapid nucleotide exchange. Plays a role in 16S rRNA processing and 30S ribosomal subunit biogenesis and possibly also in cell cycle regulation and energy metabolism. This is GTPase Era from Bradyrhizobium diazoefficiens (strain JCM 10833 / BCRC 13528 / IAM 13628 / NBRC 14792 / USDA 110).